Reading from the N-terminus, the 854-residue chain is DNA mismatch repair protein MutS (854 aa).

Position 615-622 (615-622 (GPNMGGKS)) interacts with ATP.

It belongs to the DNA mismatch repair MutS family.

Functionally, this protein is involved in the repair of mismatches in DNA. It is possible that it carries out the mismatch recognition step. This protein has a weak ATPase activity. The polypeptide is DNA mismatch repair protein MutS (Proteus mirabilis (strain HI4320)).